A 149-amino-acid chain; its full sequence is Probable glycine cleavage system H protein 2 (149 aa).

The Lipoyl-binding domain occupies isoleucine 32–lysine 114. The residue at position 73 (lysine 73) is an N6-lipoyllysine.

The protein belongs to the GcvH family. As to quaternary structure, the glycine cleavage system is composed of four proteins: P, T, L and H. It depends on (R)-lipoate as a cofactor.

The glycine cleavage system catalyzes the degradation of glycine. The H protein shuttles the methylamine group of glycine from the P protein to the T protein. This is Probable glycine cleavage system H protein 2 from Sulfolobus acidocaldarius (strain ATCC 33909 / DSM 639 / JCM 8929 / NBRC 15157 / NCIMB 11770).